Reading from the N-terminus, the 502-residue chain is 2-isopropylmalate synthase (502 aa).

Mn(2+)-binding residues include Asp-1, His-189, His-191, and Asn-225. The 254-residue stretch at 1 to 254 (DGEQALQASL…STNINYKEIY (254 aa)) folds into the Pyruvate carboxyltransferase domain. Residues 379–502 (CLKFFSVQSI…VNKKLQELKK (124 aa)) are regulatory domain.

The protein belongs to the alpha-IPM synthase/homocitrate synthase family. LeuA type 1 subfamily. Homodimer. Mn(2+) is required as a cofactor.

It localises to the cytoplasm. It catalyses the reaction 3-methyl-2-oxobutanoate + acetyl-CoA + H2O = (2S)-2-isopropylmalate + CoA + H(+). The protein operates within amino-acid biosynthesis; L-leucine biosynthesis; L-leucine from 3-methyl-2-oxobutanoate: step 1/4. In terms of biological role, catalyzes the condensation of the acetyl group of acetyl-CoA with 3-methyl-2-oxobutanoate (2-ketoisovalerate) to form 3-carboxy-3-hydroxy-4-methylpentanoate (2-isopropylmalate). The protein is 2-isopropylmalate synthase of Buchnera aphidicola subsp. Macrosiphoniella ludovicianae.